We begin with the raw amino-acid sequence, 244 residues long: Probable transcriptional regulatory protein Aasi_0624 (244 aa).

The protein belongs to the TACO1 family.

It localises to the cytoplasm. This chain is Probable transcriptional regulatory protein Aasi_0624, found in Amoebophilus asiaticus (strain 5a2).